The chain runs to 368 residues: 3-isopropylmalate dehydrogenase (368 aa).

Position 79-91 (79-91) interacts with NAD(+); it reads GPEWGTSSTVRPE. Residues R98, R108, R137, and D226 each contribute to the substrate site. Mg(2+)-binding residues include D226, D251, and D255. An NAD(+)-binding site is contributed by 291–303; it reads GSAPDISGKGIVN.

The protein belongs to the isocitrate and isopropylmalate dehydrogenases family. As to quaternary structure, homodimer. Mg(2+) serves as cofactor. Requires Mn(2+) as cofactor.

The protein resides in the cytoplasm. It catalyses the reaction (2R,3S)-3-isopropylmalate + NAD(+) = 4-methyl-2-oxopentanoate + CO2 + NADH. Its pathway is amino-acid biosynthesis; L-leucine biosynthesis; L-leucine from 3-methyl-2-oxobutanoate: step 3/4. Its function is as follows. Catalyzes the oxidation of 3-carboxy-2-hydroxy-4-methylpentanoate (3-isopropylmalate) to 3-carboxy-4-methyl-2-oxopentanoate. The product decarboxylates to 4-methyl-2 oxopentanoate. This is 3-isopropylmalate dehydrogenase (LEU1) from Sordaria macrospora.